The following is a 323-amino-acid chain: tRNA dimethylallyltransferase (323 aa).

12–19 (GPTAAGKT) contributes to the ATP binding site. 14–19 (TAAGKT) is a binding site for substrate. Interaction with substrate tRNA stretches follow at residues 37–40 (DSAL) and 161–165 (QRLIR).

The protein belongs to the IPP transferase family. As to quaternary structure, monomer. The cofactor is Mg(2+).

It catalyses the reaction adenosine(37) in tRNA + dimethylallyl diphosphate = N(6)-dimethylallyladenosine(37) in tRNA + diphosphate. Functionally, catalyzes the transfer of a dimethylallyl group onto the adenine at position 37 in tRNAs that read codons beginning with uridine, leading to the formation of N6-(dimethylallyl)adenosine (i(6)A). The chain is tRNA dimethylallyltransferase from Pseudomonas putida (strain ATCC 700007 / DSM 6899 / JCM 31910 / BCRC 17059 / LMG 24140 / F1).